Here is a 203-residue protein sequence, read N- to C-terminus: High-molecular weight cobalt-containing nitrile hydratase subunit alpha (203 aa).

Residues cysteine 102, cysteine 105, serine 106, and cysteine 107 each contribute to the Co(3+) site.

Belongs to the nitrile hydratase subunit alpha family. As to quaternary structure, heterodimer of an alpha and a beta chain. The cofactor is Co(3+).

The catalysed reaction is an aliphatic primary amide = an aliphatic nitrile + H2O. In terms of biological role, NHase catalyzes the hydration of various nitrile compounds to the corresponding amides. In Rhodococcus rhodochrous, this protein is High-molecular weight cobalt-containing nitrile hydratase subunit alpha (nhhA).